Reading from the N-terminus, the 131-residue chain is Class I hydrophobin 9 (131 aa).

Positions 1–23 (MFARRAISIFAFMLVALSIFAAA) are cleaved as a signal peptide. 4 disulfide bridges follow: Cys-52/Cys-112, Cys-59/Cys-106, Cys-60/Cys-93, and Cys-113/Cys-126. An N-linked (GlcNAc...) asparagine glycan is attached at Asn-53. A glycan (N-linked (GlcNAc...) asparagine) is linked at Asn-115.

This sequence belongs to the fungal hydrophobin family. Self-assembles to form functional amyloid fibrils called rodlets. Self-assembly into fibrillar rodlets occurs spontaneously at hydrophobic:hydrophilic interfaces and the rodlets further associate laterally to form amphipathic monolayers.

It localises to the secreted. Its subcellular location is the cell wall. Functionally, aerial growth, conidiation, and dispersal of filamentous fungi in the environment rely upon a capability of their secreting small amphipathic proteins called hydrophobins (HPBs) with low sequence identity. Class I can self-assemble into an outermost layer of rodlet bundles on aerial cell surfaces, conferring cellular hydrophobicity that supports fungal growth, development and dispersal; whereas Class II form highly ordered films at water-air interfaces through intermolecular interactions but contribute nothing to the rodlet structure. The chain is Class I hydrophobin 9 from Flammulina velutipes (Agaricus velutipes).